A 1152-amino-acid polypeptide reads, in one-letter code: Syntaxin-binding protein 5 (1152 aa).

The disordered stretch occupies residues 14–35; it reads TAGSSSASQQQQQQQHPPGNRE. Low complexity predominate over residues 17–28; sequence SSSASQQQQQQQ. WD repeat units lie at residues 62-95, 102-141, 146-182, 201-235, 241-273, 295-337, 345-379, 401-478, 506-620, and 634-696; these read SALAFDPVQKILAVGTQTGALRLFGRPGVECYCQ, VIQLQFLINEGALVSALADDTLHLWNLRQKRPAVLHSLKF, VTFCHLPFQSKWLYVGTERGNIHIVNVESFTLSGYVI, HISDNPMDEGKLLIGFESGTVVLWDLKSKKADYRY, IHSVAWHHEGKQFICSHSDGTLTIWNVRSPAKP, PILK…KSTA, IVDFLTLCETPYPNDFQEPYAVVVLLEKDLVLIDL, TCCE…YKLK, QIIS…ELVI, and TSLA…SGAG. Disordered stretches follow at residues 555 to 596 and 675 to 731; these read VDTP…GLRD and SNDP…QKVN. A Phosphoserine modification is found at Ser693. Low complexity predominate over residues 713 to 722; the sequence is SPTSGSSSPH. Phosphoserine is present on residues Ser724 and Ser760. A Phosphothreonine modification is found at Thr763. Position 783 is a phosphoserine (Ser783). Position 785 is a phosphothreonine (Thr785). Ser786 carries the phosphoserine modification. WD repeat units lie at residues 795–852, 861–935, 940–984, and 998–1021; these read ISAL…SGTI, RMAF…QSCA, ITET…LDVY, and CFANNGQALYLVSPTEIQRLTYSQ. Basic and acidic residues predominate over residues 883–893; it reads NVAEEKDEKEK. Residues 883–907 are disordered; that stretch reads NVAEEKDEKEKLKKRRPVSVSPSSS. Residues Ser901 and Ser903 each carry the phosphoserine modification. Thr1040 carries the phosphothreonine modification. Ser1059 and Ser1132 each carry phosphoserine. Residues 1087–1147 enclose the v-SNARE coiled-coil homology domain; that stretch reads GIEGVKGAAS…HEMMLKYKDK (61 aa).

Belongs to the WD repeat L(2)GL family. Part of a complex that contains STX1, STXBP5, SNAP25 and SYT1. Interacts with STX1A and STX4A via its v-SNARE homology domain. Part of a complex that contains STXBP5, STX4A and SNAP23. As to expression, detected in heart, spleen, lung, skeletal muscle, liver and kidney (at protein level). Detected in brain, particularly in the olfactory bulb and in hippocampus. Detected in the tenia tecta and in the piriform layer of the brain cortex.

It localises to the cytoplasm. Its subcellular location is the cell membrane. The protein resides in the membrane. Functionally, plays a regulatory role in calcium-dependent exocytosis and neurotransmitter release. Inhibits membrane fusion between transport vesicles and the plasma membrane. May modulate the assembly of trans-SNARE complexes between transport vesicles and the plasma membrane. Competes with STXBP1 for STX1 binding. Inhibits translocation of GLUT4 from intracellular vesicles to the plasma membrane. The polypeptide is Syntaxin-binding protein 5 (Stxbp5) (Mus musculus (Mouse)).